The sequence spans 623 residues: MSRPGVLLPVNGHNFGSQGGPPRVVVWEWLNEHGRWRPYTATVCHHIENALREDGRGRVALGQVDAQLTPYVIDLQTMHQYRQDTGTIRPVRRNFFEPSSAPGKGIVWEWENDAGSWTPYDTEICIAIQNAYEKHHPYLDLTTLGFCYLVHFHSMCQVNRQTHRKRRLRRRMDLAYPLTMGSIPKSQSWPVGSGSGLPCSCPQCLLVNSTRAASNAILASQRIKVPSGPPPALPPPPPPPIHPSGLRQSNTYSGGAAGWGRTGEGMRSTGGIRNGSGFSRSQSVPGAAPYPGQNNLNRPGEQRTSGSSSRASIPPGVPALPVKNLNGSGPVHPALAGMTGILMCAAGLPVCLTRAPKPILHPPPVSKEDIKPVSGVSGICRKTKKKHLKKSKNPEEVVRRYIQKVKSPPDEDCTICMERLVTASGYDGVLSHRGIRAELVGKLGKCNHMYHVLCPVAMYNNGNKDGSLQCPTCKAIYGEKTGTQPPGKMEFHVIPHSLPGFSDCKTIRIVYDIPSGMQGPEHPNPGKKFTARGFPRHCYLPDNDKGRKVLRLLLAAWERRLIFAIGTSSTTGESNTVVWNEIHHKTEFGSNLTGHGYPDPNYLDNVLTELHRQGVMEERSLPY.

WWE domains lie at 13-93 and 94-170; these read HNFG…PVRR and NFFE…RLRR. The interval 224–319 is disordered; sequence KVPSGPPPAL…RASIPPGVPA (96 aa). Positions 227 to 242 are enriched in pro residues; the sequence is SGPPPALPPPPPPPIH. Polar residues predominate over residues 292–311; it reads GQNNLNRPGEQRTSGSSSRA. The segment at 413 to 474 adopts an RING-type zinc-finger fold; the sequence is CTICMERLVT…DGSLQCPTCK (62 aa).

The protein belongs to the Deltex family. In terms of assembly, may form a homo- or heterodimer with other members of the Deltex family. Probably interacts with Notch1. In terms of tissue distribution, specifically expressed in regions undergoing neuronal differentiation. Mainly colocalizes with Notch1.

The enzyme catalyses S-ubiquitinyl-[E2 ubiquitin-conjugating enzyme]-L-cysteine + [acceptor protein]-L-lysine = [E2 ubiquitin-conjugating enzyme]-L-cysteine + N(6)-ubiquitinyl-[acceptor protein]-L-lysine.. Its pathway is protein modification; protein ubiquitination. Regulator of Notch signaling, a signaling pathway involved in cell-cell communications that regulates a broad spectrum of cell-fate determinations. Probably acts both as a positive and negative regulator of Notch, depending on the developmental and cell context. Functions as a ubiquitin ligase protein in vivo, mediating ubiquitination and promoting degradation of MEKK1, suggesting that it may regulate the Notch pathway via some ubiquitin ligase activity. The polypeptide is E3 ubiquitin-protein ligase DTX1 (dtx1) (Xenopus laevis (African clawed frog)).